The chain runs to 301 residues: Ribosomal protein L11 methyltransferase (301 aa).

The S-adenosyl-L-methionine site is built by T146, G167, D189, and N234.

It belongs to the methyltransferase superfamily. PrmA family.

The protein resides in the cytoplasm. The catalysed reaction is L-lysyl-[protein] + 3 S-adenosyl-L-methionine = N(6),N(6),N(6)-trimethyl-L-lysyl-[protein] + 3 S-adenosyl-L-homocysteine + 3 H(+). Its function is as follows. Methylates ribosomal protein L11. This is Ribosomal protein L11 methyltransferase from Acinetobacter baumannii (strain AB307-0294).